The sequence spans 306 residues: Lipoyl synthase (306 aa).

Residues Cys41, Cys46, Cys52, Cys68, Cys72, Cys75, and Ser281 each contribute to the [4Fe-4S] cluster site. The region spanning 54–270 (GARRTATFMI…RKVAMDKGFK (217 aa)) is the Radical SAM core domain. The tract at residues 283 to 306 (HADEQVNEAAKEKHRLGEEKLQQN) is disordered.

This sequence belongs to the radical SAM superfamily. Lipoyl synthase family. [4Fe-4S] cluster serves as cofactor.

Its subcellular location is the cytoplasm. It catalyses the reaction [[Fe-S] cluster scaffold protein carrying a second [4Fe-4S](2+) cluster] + N(6)-octanoyl-L-lysyl-[protein] + 2 oxidized [2Fe-2S]-[ferredoxin] + 2 S-adenosyl-L-methionine + 4 H(+) = [[Fe-S] cluster scaffold protein] + N(6)-[(R)-dihydrolipoyl]-L-lysyl-[protein] + 4 Fe(3+) + 2 hydrogen sulfide + 2 5'-deoxyadenosine + 2 L-methionine + 2 reduced [2Fe-2S]-[ferredoxin]. It functions in the pathway protein modification; protein lipoylation via endogenous pathway; protein N(6)-(lipoyl)lysine from octanoyl-[acyl-carrier-protein]. Its function is as follows. Catalyzes the radical-mediated insertion of two sulfur atoms into the C-6 and C-8 positions of the octanoyl moiety bound to the lipoyl domains of lipoate-dependent enzymes, thereby converting the octanoylated domains into lipoylated derivatives. This chain is Lipoyl synthase, found in Staphylococcus haemolyticus (strain JCSC1435).